A 939-amino-acid polypeptide reads, in one-letter code: Isoleucine--tRNA ligase (939 aa).

A 'HIGH' region motif is present at residues 58–68 (PYANGNIHIGH). Glu-562 contributes to the L-isoleucyl-5'-AMP binding site. The 'KMSKS' region motif lies at 603–607 (KMSKS). Lys-606 contacts ATP. Positions 903, 906, 922, and 925 each coordinate Zn(2+).

It belongs to the class-I aminoacyl-tRNA synthetase family. IleS type 1 subfamily. In terms of assembly, monomer. It depends on Zn(2+) as a cofactor.

Its subcellular location is the cytoplasm. The enzyme catalyses tRNA(Ile) + L-isoleucine + ATP = L-isoleucyl-tRNA(Ile) + AMP + diphosphate. Catalyzes the attachment of isoleucine to tRNA(Ile). As IleRS can inadvertently accommodate and process structurally similar amino acids such as valine, to avoid such errors it has two additional distinct tRNA(Ile)-dependent editing activities. One activity is designated as 'pretransfer' editing and involves the hydrolysis of activated Val-AMP. The other activity is designated 'posttransfer' editing and involves deacylation of mischarged Val-tRNA(Ile). This is Isoleucine--tRNA ligase from Buchnera aphidicola subsp. Baizongia pistaciae (strain Bp).